The primary structure comprises 152 residues: SsrA-binding protein (152 aa).

Belongs to the SmpB family.

The protein localises to the cytoplasm. Functionally, required for rescue of stalled ribosomes mediated by trans-translation. Binds to transfer-messenger RNA (tmRNA), required for stable association of tmRNA with ribosomes. tmRNA and SmpB together mimic tRNA shape, replacing the anticodon stem-loop with SmpB. tmRNA is encoded by the ssrA gene; the 2 termini fold to resemble tRNA(Ala) and it encodes a 'tag peptide', a short internal open reading frame. During trans-translation Ala-aminoacylated tmRNA acts like a tRNA, entering the A-site of stalled ribosomes, displacing the stalled mRNA. The ribosome then switches to translate the ORF on the tmRNA; the nascent peptide is terminated with the 'tag peptide' encoded by the tmRNA and targeted for degradation. The ribosome is freed to recommence translation, which seems to be the essential function of trans-translation. The sequence is that of SsrA-binding protein from Rickettsia felis (strain ATCC VR-1525 / URRWXCal2) (Rickettsia azadi).